The chain runs to 127 residues: Small ribosomal subunit protein uS11 (127 aa).

The protein belongs to the universal ribosomal protein uS11 family. As to quaternary structure, part of the 30S ribosomal subunit. Interacts with proteins S7 and S18. Binds to IF-3.

In terms of biological role, located on the platform of the 30S subunit, it bridges several disparate RNA helices of the 16S rRNA. Forms part of the Shine-Dalgarno cleft in the 70S ribosome. The chain is Small ribosomal subunit protein uS11 from Pelodictyon phaeoclathratiforme (strain DSM 5477 / BU-1).